The chain runs to 667 residues: UvrABC system protein B (667 aa).

The Helicase ATP-binding domain occupies 31 to 414; that stretch reads KNFEAGAKAQ…EAEQTDIQVD (384 aa). ATP is bound at residue 44–51; sequence GATGTGKT. The short motif at 97–120 is the Beta-hairpin element; that stretch reads YYDYYQPEAYVPSSDTYIEKDSSI. One can recognise a Helicase C-terminal domain in the interval 435–597; that stretch reads QIDDLVGEIN…ITPKTIIKPI (163 aa). Positions 630–665 constitute a UVR domain; that stretch reads LEMVERLSEQMRLAAKKLDFEQAATLRDTILELKSE.

It belongs to the UvrB family. As to quaternary structure, forms a heterotetramer with UvrA during the search for lesions. Interacts with UvrC in an incision complex.

It localises to the cytoplasm. The UvrABC repair system catalyzes the recognition and processing of DNA lesions. A damage recognition complex composed of 2 UvrA and 2 UvrB subunits scans DNA for abnormalities. Upon binding of the UvrA(2)B(2) complex to a putative damaged site, the DNA wraps around one UvrB monomer. DNA wrap is dependent on ATP binding by UvrB and probably causes local melting of the DNA helix, facilitating insertion of UvrB beta-hairpin between the DNA strands. Then UvrB probes one DNA strand for the presence of a lesion. If a lesion is found the UvrA subunits dissociate and the UvrB-DNA preincision complex is formed. This complex is subsequently bound by UvrC and the second UvrB is released. If no lesion is found, the DNA wraps around the other UvrB subunit that will check the other stand for damage. This Latilactobacillus sakei subsp. sakei (strain 23K) (Lactobacillus sakei subsp. sakei) protein is UvrABC system protein B.